Here is a 102-residue protein sequence, read N- to C-terminus: Small ribosomal subunit protein uS10 (102 aa).

The protein belongs to the universal ribosomal protein uS10 family. Part of the 30S ribosomal subunit.

In terms of biological role, involved in the binding of tRNA to the ribosomes. This chain is Small ribosomal subunit protein uS10, found in Enterococcus faecalis (strain ATCC 700802 / V583).